The primary structure comprises 170 residues: Lipoprotein signal peptidase (170 aa).

Helical transmembrane passes span 12–32, 67–87, and 93–113; these read WYWVVVLVFLADQLSKQWVLA, WQRWLFTIVAVGFSSLLTVWL, and SLLKLNLAYTLVIGGALGNLV. Active-site residues include D123 and D141. Residues 137–157 form a helical membrane-spanning segment; that stretch reads FNIADSAIFIGAVLIIWDSFF.

This sequence belongs to the peptidase A8 family.

It is found in the cell inner membrane. The enzyme catalyses Release of signal peptides from bacterial membrane prolipoproteins. Hydrolyzes -Xaa-Yaa-Zaa-|-(S,diacylglyceryl)Cys-, in which Xaa is hydrophobic (preferably Leu), and Yaa (Ala or Ser) and Zaa (Gly or Ala) have small, neutral side chains.. It functions in the pathway protein modification; lipoprotein biosynthesis (signal peptide cleavage). In terms of biological role, this protein specifically catalyzes the removal of signal peptides from prolipoproteins. This is Lipoprotein signal peptidase from Shewanella oneidensis (strain ATCC 700550 / JCM 31522 / CIP 106686 / LMG 19005 / NCIMB 14063 / MR-1).